The sequence spans 429 residues: Serine/threonine-protein kinase BGLF4 (429 aa).

The segment at 1–27 (MDVNMAAELSPTNSSSSGELSVSPEPP) is disordered. The region spanning 1 to 409 (MDVNMAAELS…CRPRFEHPHL (409 aa)) is the Protein kinase domain. The span at 14–23 (SSSSGELSVS) shows a compositional bias: low complexity. The tract at residues 36–40 (KVTVI) is SUMO interaction motif. ATP contacts are provided by residues 110–118 (LYHELMVCD) and Glu-128. Asp-195 serves as the catalytic Proton acceptor. The interval 344-350 (VVLLEVL) is SUMO interaction motif.

It belongs to the protein kinase superfamily. Ser/Thr protein kinase family. Interacts with host NUP62 and NUP153; this interaction plays a role in nuclear targeting of BGLF4. Interacts with host SUMO1 and SUMO2.

It is found in the virion tegument. It localises to the host nucleus. It carries out the reaction L-seryl-[protein] + ATP = O-phospho-L-seryl-[protein] + ADP + H(+). It catalyses the reaction L-threonyl-[protein] + ATP = O-phospho-L-threonyl-[protein] + ADP + H(+). Functionally, plays many key roles by phosphorylating several proteins including the viral DNA processivity factor BMRF1, EBNA1 or EBNA2. Modifies the host nuclear envelope structure and induces the redistribution of nuclear envelope-associated proteins by phosphorylating host nucleoporins. Subsequently, promotes the nuclear transport of EBV lytic proteins. Required for efficient lytic DNA replication and release of nucleocapsids from the nucleus. Contributes to the compaction of host cell chromatin in cells undergoing lytic replication, presumably by phosphorylating the host condensin complex and host TOP2A. Induces disassembly of the nuclear lamina by phosphorylating with host LMNA. Phosphorylates substrates involved in capsid assembly and DNA packaging. Facilitates the switch from latent to lytic DNA replication by down-regulating EBNA1 replication function. Phosphorylates the viral immediate-early protein BZLF1 and inhibits its sumoylation by interacting with host SUMO1 and SUMO2. Phosphorylates also host SAMHD1 and thereby counteracts its antiviral effect by reducing its dNTP hydrolase activity. This chain is Serine/threonine-protein kinase BGLF4, found in Epstein-Barr virus (strain AG876) (HHV-4).